Here is an 88-residue protein sequence, read N- to C-terminus: Exodeoxyribonuclease 7 small subunit (88 aa).

This sequence belongs to the XseB family. As to quaternary structure, heterooligomer composed of large and small subunits.

The protein resides in the cytoplasm. The enzyme catalyses Exonucleolytic cleavage in either 5'- to 3'- or 3'- to 5'-direction to yield nucleoside 5'-phosphates.. Functionally, bidirectionally degrades single-stranded DNA into large acid-insoluble oligonucleotides, which are then degraded further into small acid-soluble oligonucleotides. This chain is Exodeoxyribonuclease 7 small subunit, found in Bordetella bronchiseptica (strain ATCC BAA-588 / NCTC 13252 / RB50) (Alcaligenes bronchisepticus).